The chain runs to 651 residues: DNA ligase (651 aa).

NAD(+)-binding positions include 32–36 (DAEYD), 75–76 (SL), and Glu106. Catalysis depends on Lys108, which acts as the N6-AMP-lysine intermediate. NAD(+) contacts are provided by Arg129, Glu164, Lys271, and Lys295. Zn(2+)-binding residues include Cys389, Cys392, Cys405, and Cys411. The BRCT domain occupies 575–651 (SSDSFLNNKI…LDEEQWNRLC (77 aa)).

Belongs to the NAD-dependent DNA ligase family. LigA subfamily. The cofactor is Mg(2+). Requires Mn(2+) as cofactor.

The catalysed reaction is NAD(+) + (deoxyribonucleotide)n-3'-hydroxyl + 5'-phospho-(deoxyribonucleotide)m = (deoxyribonucleotide)n+m + AMP + beta-nicotinamide D-nucleotide.. DNA ligase that catalyzes the formation of phosphodiester linkages between 5'-phosphoryl and 3'-hydroxyl groups in double-stranded DNA using NAD as a coenzyme and as the energy source for the reaction. It is essential for DNA replication and repair of damaged DNA. This chain is DNA ligase, found in Wolbachia pipientis subsp. Culex pipiens (strain wPip).